The sequence spans 340 residues: MQLRDALEQLLNKHDLTAEQMEWVMQMLMSGQATSAQIAAILVALRAKGETVEEITAAASVMRSLATQVTLTDKTHMVDTCGTGGDGANTFNISTASAFVAAAAGAKVAKHGSRSVSSQSGSADLLEKAGVNLNLTPEQVAECVETVGVGFMYAPAHHSAMKHVIGVRKEIGVRTLFNILGPLTNPAQAPAQVLGVYDSSLLMPFAQVLRELGSKHVMIVHAQDGLDEISIASLTDVAELKEGVITQWTIDPSEYDADHPDLSELKIDSAQDSLNIIHAVLANDHSAAADIVCLNAGASIYVSGVVSTYAEGVQMAKNVIANGQARTLFNQFVEKTQSFA.

Residues Gly-82, 85 to 86 (GD), Thr-90, 92 to 95 (NIST), 110 to 118 (KHGSRSVSS), and Ser-122 contribute to the 5-phospho-alpha-D-ribose 1-diphosphate site. Gly-82 lines the anthranilate pocket. Mg(2+) is bound at residue Ser-94. Arg-168 is an anthranilate binding site. 2 residues coordinate Mg(2+): Asp-227 and Glu-228.

Belongs to the anthranilate phosphoribosyltransferase family. As to quaternary structure, homodimer. Mg(2+) serves as cofactor.

The catalysed reaction is N-(5-phospho-beta-D-ribosyl)anthranilate + diphosphate = 5-phospho-alpha-D-ribose 1-diphosphate + anthranilate. The protein operates within amino-acid biosynthesis; L-tryptophan biosynthesis; L-tryptophan from chorismate: step 2/5. Its function is as follows. Catalyzes the transfer of the phosphoribosyl group of 5-phosphorylribose-1-pyrophosphate (PRPP) to anthranilate to yield N-(5'-phosphoribosyl)-anthranilate (PRA). This Hydrogenovibrio crunogenus (strain DSM 25203 / XCL-2) (Thiomicrospira crunogena) protein is Anthranilate phosphoribosyltransferase.